Consider the following 216-residue polypeptide: Acyl-homoserine-lactone synthase (216 aa).

It belongs to the autoinducer synthase family.

It carries out the reaction a fatty acyl-[ACP] + S-adenosyl-L-methionine = an N-acyl-L-homoserine lactone + S-methyl-5'-thioadenosine + holo-[ACP] + H(+). Required for the synthesis of OHHL (N-(3-oxohexanoyl)-L-homoserine lactone), an autoinducer molecule which binds to a yet uncharacterized transcriptional regulator. The chain is Acyl-homoserine-lactone synthase (eagI) from Enterobacter agglomerans (Erwinia herbicola).